The primary structure comprises 1526 residues: MNRTSPYYCRRSVLSLLISALIYAPPGMAAFTTNVIGVVNDETVDGNQKVDERGTTNNTHIINHGQQNVHGGVSNGSLIESGGYQDIGSHNNFVGQANNTTINGGRQSIHDGGISTGTTIESGNQDVYKGGISNGTTIKGGASRVEGGSANGILIDGGSQIVKVQGHADGTTINKSGSQDVVQGSLATNTTINGGRQYVEQSTVETTTIKNGGEQRVYESRALDTTIEGGTQSLNSKSTAKNTHIYSGGTQIVDNTSTSDVIEVYSGGVLDVRGGTATNVTQHDGAILKTNTNGTTVSGTNSEGAFSIHNHVADNVLLENGGHLDINAYGSANKTIIKDKGTMSVLTNAKADATRIDNGGVMDVAGNATNTIINGGTQNINNYGIATGTNINSGTQNIKSGGKADTTIISSGSRQVVEKDGTAIGSNISAGGSLIVYTGGIAHGVNQETGSALVANTGAGTDIEGYNKLSHFTITGGEANYVVLENTGELTVVAKTSAKNTTIDTGGKLIVQKEAKTDSTRLNNGGVLEVQDGGEAKHVEQQSGGALIASTTSGTLIEGTNSYGDAFYIRNSEAKNVVLENAGSLTVVTGSRAVDTIINANGKMDVYGKDVGTVLNSAGTQTIYASATSDKANIKGGKQTVYGLATEANIESGEQIVDGGSTEKTHINGGTQTVQNYGKAINTDIVSGLQQIMANGTAEGSIINGGSQVVNEGGLAENSVLNDGGTLDVREKGSATGIQQSSQGALVATTRATRVTGTRADGVAFSIEQGAANNILLANGGVLTVESDTSSDKTQVNMGGREIVKTKATATGTTLTGGEQIVEGVANETTINDGGIQTVSANGEAIKTKINEGGTLTVNDNGKATDIVQNSGAALQTSTANGIEISGTHQYGTFSISGNLATNMLLENGGNLLVLAGTEARDSTVGKGGAMQNLGQDSATKVNSGGQYTLGRSKDEFQALARAEDLQVAGGTAIVYAGTLADASVSGATGSLSLMTPRDNVTPVKLEGAVRITDSATLTLGNGVDTTLADLTAASRGSVWLNSNNSCAGTSNCEYRVNSLLLNDGDVYLSAQTAAPATTNGIYNTLTTNELSGSGNFYLHTNVAGSRGDQLVVNNNATGNFKIFVQDTGVSPQSDDAMTLVKTGGGDASFTLGNTGGFVDLGTYEYVLKSDGNSNWNLTNDVKPNPDPIPNPKPDPKPDPKPDPNPKPDPTPDPTPTPVPEKRITPSTAAVLNMAATLPLVFDAELNSIRERLNIMKASPHNNNVWGATYNTRNNVTTDAGAGFEQTLTGMTVGIDSRNDIPEGITTLGAFMGYSHSHIGFDRGGHGSVGSYSLGGYASWEHESGFYLDGVVKLNRFKSNVAGKMSSGGAANGSYHSNGLGGHIETGMRFTDGNWNLTPYASLTGFTADNPEYHLSNGMKSKSVDTRSIYRELGATLSYNMRLGNGMEVEPWLKAAVRKEFVDDNRVKVNSDGNFVNYLSGRRGIYQAGIKASFSSTLSGHLGVGYSHSAGVESPWNAVAGVNWSF.

The signal sequence occupies residues Met-1 to Ala-29. The disordered stretch occupies residues Asn-1173–Arg-1223. Residues Pro-1194–Pro-1206 are compositionally biased toward basic and acidic residues. Residues Lys-1207–Val-1219 show a composition bias toward pro residues. Residues Ala-1258–Phe-1526 form the Autotransporter domain.

The protein localises to the cell outer membrane. In terms of biological role, upon overexpression shows increased adherence to polyvinyl chloride (PVC) plates, increased mature biofilm formation. This Escherichia coli (strain K12) protein is Probable autotransporter YpjA (ypjA).